A 614-amino-acid polypeptide reads, in one-letter code: Threonine--tRNA ligase (614 aa).

The interval 1–138 (MRILTIHARK…PLSELSKTIR (138 aa)) is editing domain. Catalytic regions lie at residues 195-492 (NRVN…PYIP) and 196-492 (RVND…PYIP). Residues cysteine 289, histidine 340, and histidine 461 each coordinate Zn(2+).

It belongs to the class-II aminoacyl-tRNA synthetase family. As to quaternary structure, homodimer. It depends on Zn(2+) as a cofactor.

It localises to the cytoplasm. The catalysed reaction is tRNA(Thr) + L-threonine + ATP = L-threonyl-tRNA(Thr) + AMP + diphosphate + H(+). Catalyzes the attachment of threonine to tRNA(Thr) in a two-step reaction: L-threonine is first activated by ATP to form Thr-AMP and then transferred to the acceptor end of tRNA(Thr). Also edits incorrectly charged L-seryl-tRNA(Thr). This chain is Threonine--tRNA ligase, found in Staphylothermus marinus (strain ATCC 43588 / DSM 3639 / JCM 9404 / F1).